A 229-amino-acid chain; its full sequence is MKLSFHGQSTIYFEANGKKVIVDPFITGNGQSDLDASTLKVDYIILTHGHGDHFGDTIELANRNHATVIGSAELGDYLTTYHNVENVRPMNIGGKAEFDFGNVKFVQAFHSSSLTDENGVPVYLGMPMGLILEIEGKTIYHTGDTGLFSDMKLIADRHPVDVCFIPIGDNFTMGIDDASYAINSFIKPKISVPIHYDTFELIEQDPNKFKQAVSVGEVQILKPGEDVSF.

This sequence belongs to the UPF0173 family.

This Staphylococcus saprophyticus subsp. saprophyticus (strain ATCC 15305 / DSM 20229 / NCIMB 8711 / NCTC 7292 / S-41) protein is UPF0173 metal-dependent hydrolase SSP1060.